The following is a 237-amino-acid chain: UDP-2,3-diacylglucosamine hydrolase (237 aa).

Residues Asp-8, His-10, Asp-41, Asn-78, and His-113 each coordinate Mn(2+). 78–79 (NR) provides a ligand contact to substrate. Asp-121, Ser-159, Gln-164, and His-195 together coordinate substrate. Positions 195 and 197 each coordinate Mn(2+).

The protein belongs to the LpxH family. The cofactor is Mn(2+).

The protein resides in the cell inner membrane. The catalysed reaction is UDP-2-N,3-O-bis[(3R)-3-hydroxytetradecanoyl]-alpha-D-glucosamine + H2O = 2-N,3-O-bis[(3R)-3-hydroxytetradecanoyl]-alpha-D-glucosaminyl 1-phosphate + UMP + 2 H(+). The protein operates within glycolipid biosynthesis; lipid IV(A) biosynthesis; lipid IV(A) from (3R)-3-hydroxytetradecanoyl-[acyl-carrier-protein] and UDP-N-acetyl-alpha-D-glucosamine: step 4/6. Its function is as follows. Hydrolyzes the pyrophosphate bond of UDP-2,3-diacylglucosamine to yield 2,3-diacylglucosamine 1-phosphate (lipid X) and UMP by catalyzing the attack of water at the alpha-P atom. Involved in the biosynthesis of lipid A, a phosphorylated glycolipid that anchors the lipopolysaccharide to the outer membrane of the cell. The chain is UDP-2,3-diacylglucosamine hydrolase from Chromobacterium violaceum (strain ATCC 12472 / DSM 30191 / JCM 1249 / CCUG 213 / NBRC 12614 / NCIMB 9131 / NCTC 9757 / MK).